The following is an 870-amino-acid chain: Histidine biosynthesis trifunctional protein (870 aa).

The segment at Met-1–Phe-285 is phosphoribosyl-AMP cyclohydrolase. The interval Cys-286–Ala-367 is phosphoribosyl-ATP pyrophosphohydrolase. The segment at Ala-368–Asn-870 is histidinol dehydrogenase. The Zn(2+) site is built by Gln-693 and His-696. Residues Glu-762 and His-763 contribute to the active site. 2 residues coordinate Zn(2+): Asp-796 and His-855.

In the C-terminal section; belongs to the histidinol dehydrogenase family. Requires Zn(2+) as cofactor.

It catalyses the reaction 1-(5-phospho-beta-D-ribosyl)-5'-AMP + H2O = 1-(5-phospho-beta-D-ribosyl)-5-[(5-phospho-beta-D-ribosylamino)methylideneamino]imidazole-4-carboxamide. The enzyme catalyses 1-(5-phospho-beta-D-ribosyl)-ATP + H2O = 1-(5-phospho-beta-D-ribosyl)-5'-AMP + diphosphate + H(+). It carries out the reaction L-histidinol + 2 NAD(+) + H2O = L-histidine + 2 NADH + 3 H(+). It participates in amino-acid biosynthesis; L-histidine biosynthesis; L-histidine from 5-phospho-alpha-D-ribose 1-diphosphate: step 2/9. The protein operates within amino-acid biosynthesis; L-histidine biosynthesis; L-histidine from 5-phospho-alpha-D-ribose 1-diphosphate: step 3/9. It functions in the pathway amino-acid biosynthesis; L-histidine biosynthesis; L-histidine from 5-phospho-alpha-D-ribose 1-diphosphate: step 9/9. The polypeptide is Histidine biosynthesis trifunctional protein (his-3) (Neurospora crassa (strain ATCC 24698 / 74-OR23-1A / CBS 708.71 / DSM 1257 / FGSC 987)).